A 162-amino-acid chain; its full sequence is uncharacterized protein (162 aa).

The signal sequence occupies residues 1–34; it reads MRKKNNIKKWLLIIAGFLIICIITLFVMVSGNKV.

This is an uncharacterized protein from Bacillus subtilis (strain 168).